Here is a 96-residue protein sequence, read N- to C-terminus: Co-chaperonin GroES 2 (96 aa).

This sequence belongs to the GroES chaperonin family. In terms of assembly, heptamer of 7 subunits arranged in a ring. Interacts with the chaperonin GroEL.

It localises to the cytoplasm. Its function is as follows. Together with the chaperonin GroEL, plays an essential role in assisting protein folding. The GroEL-GroES system forms a nano-cage that allows encapsulation of the non-native substrate proteins and provides a physical environment optimized to promote and accelerate protein folding. GroES binds to the apical surface of the GroEL ring, thereby capping the opening of the GroEL channel. The sequence is that of Co-chaperonin GroES 2 from Vibrio cholerae serotype O1 (strain ATCC 39315 / El Tor Inaba N16961).